Here is a 377-residue protein sequence, read N- to C-terminus: Lactosylceramide 1,3-N-acetyl-beta-D-glucosaminyltransferase (377 aa).

The Cytoplasmic segment spans residues 1–14 (MRVFVSSRRVKRWQ). The chain crosses the membrane as a helical; Signal-anchor for type II membrane protein span at residues 15 to 35 (FFHLFAICFILSFMVFWGPIN). The Lumenal segment spans residues 36–377 (NYIMSHMKSY…NSYPCRAAFA (342 aa)). N-linked (GlcNAc...) asparagine glycosylation occurs at N58.

Belongs to the glycosyltransferase 31 family.

It is found in the golgi apparatus membrane. The catalysed reaction is a beta-D-Gal-(1-&gt;4)-beta-D-Glc-(1&lt;-&gt;1)-Cer(d18:1(4E)) + UDP-N-acetyl-alpha-D-glucosamine = a beta-D-GlcNAc-(1-&gt;3)-beta-D-Gal-(1-&gt;4)-beta-D-Glc-(1&lt;-&gt;1)-Cer(d18:1(4E)) + UDP + H(+). It catalyses the reaction a neolactoside nLc4Cer(d18:1(4E)) + UDP-N-acetyl-alpha-D-glucosamine = a neolactoside IV(3)-beta-GlcNAc-nLc4Cer(d18:1(4E)) + UDP + H(+). The protein operates within protein modification; protein glycosylation. In terms of biological role, beta-1,3-N-acetylglucosaminyltransferase that plays a key role in the synthesis of lacto- or neolacto-series carbohydrate chains on glycolipids, notably by participating in biosynthesis of HNK-1 and Lewis X carbohydrate structures. Has strong activity toward lactosylceramide (LacCer) and neolactotetraosylceramide (nLc(4)Cer; paragloboside), resulting in the synthesis of Lc(3)Cer and neolactopentaosylceramide (nLc(5)Cer), respectively. Probably plays a central role in regulating neolacto-series glycolipid synthesis during embryonic development. The chain is Lactosylceramide 1,3-N-acetyl-beta-D-glucosaminyltransferase from Rattus norvegicus (Rat).